Consider the following 395-residue polypeptide: L-methionine gamma-lyase (395 aa).

Pyridoxal 5'-phosphate-binding positions include Tyr56 to Arg58 and Gly86 to Met87. Tyr111 contributes to the substrate binding site. Ser206–Thr208 serves as a coordination point for pyridoxal 5'-phosphate. An N6-(pyridoxal phosphate)lysine modification is found at Lys209. Residue Arg373 participates in substrate binding.

The protein belongs to the trans-sulfuration enzymes family. L-methionine gamma-lyase subfamily. Homotetramer. Pyridoxal 5'-phosphate serves as cofactor.

The catalysed reaction is L-methionine + H2O = methanethiol + 2-oxobutanoate + NH4(+). It carries out the reaction L-homocysteine + H2O = 2-oxobutanoate + hydrogen sulfide + NH4(+) + H(+). Catalyzes the alpha,gamma-elimination of L-methionine to produce methanethiol, 2-oxobutanoate and ammonia; methanethiol (methyl mercaptan) is considered to be one of the main causes of the oral malodor associated with periodontitis. Also displays homocysteine desulfhydrase activity, degrading homocysteine to produce hydrogen sulfide, 2-oxobutanoate and ammonia. L-cysteine and S-methyl-L-cysteine are poor substrates for the enzyme. Its function is as follows. Plays an important role in the resistance of F.nucleatum to the antibacterial agent 3-chloro-DL-alanine (3CA), thanks to its 3CA chloride-lyase (deaminating) activity. The chain is L-methionine gamma-lyase from Fusobacterium nucleatum subsp. polymorphum (Fusobacterium polymorphum).